An 84-amino-acid polypeptide reads, in one-letter code: MAHKKAGGSTRNGRDSESKRLGVKIFGHQIAKAGSIIIRQRGTKFHPGTNVGCGKDHTLFALTKGKVHFQTKKGNRKFISIITE.

The tract at residues 1-21 (MAHKKAGGSTRNGRDSESKRL) is disordered.

It belongs to the bacterial ribosomal protein bL27 family.

This is Large ribosomal subunit protein bL27 from Baumannia cicadellinicola subsp. Homalodisca coagulata.